Reading from the N-terminus, the 572-residue chain is Methionine--tRNA ligase (572 aa).

The short motif at 11–21 is the 'HIGH' region element; that stretch reads PYINGIKHLGN. Zn(2+) is bound by residues C143, C146, C156, and C159. Residues 346–350 carry the 'KMSKS' region motif; sequence QFSTS. T349 contacts ATP.

The protein belongs to the class-I aminoacyl-tRNA synthetase family. MetG type 1 subfamily. In terms of assembly, monomer. Requires Zn(2+) as cofactor.

Its subcellular location is the cytoplasm. The catalysed reaction is tRNA(Met) + L-methionine + ATP = L-methionyl-tRNA(Met) + AMP + diphosphate. In terms of biological role, is required not only for elongation of protein synthesis but also for the initiation of all mRNA translation through initiator tRNA(fMet) aminoacylation. This chain is Methionine--tRNA ligase, found in Cereibacter sphaeroides (strain ATCC 17029 / ATH 2.4.9) (Rhodobacter sphaeroides).